Consider the following 187-residue polypeptide: Ribosome-recycling factor (187 aa).

It belongs to the RRF family.

The protein localises to the cytoplasm. Responsible for the release of ribosomes from messenger RNA at the termination of protein biosynthesis. May increase the efficiency of translation by recycling ribosomes from one round of translation to another. The chain is Ribosome-recycling factor from Methylobacterium nodulans (strain LMG 21967 / CNCM I-2342 / ORS 2060).